The sequence spans 294 residues: Malate dehydrogenase (294 aa).

NAD(+)-binding positions include 7–12 and D32; that span reads GAGRVG. R81 and R87 together coordinate substrate. NAD(+) is bound by residues N94 and 117 to 119; that span reads VTN. Substrate-binding residues include N119 and R150. Catalysis depends on H172, which acts as the Proton acceptor.

Belongs to the LDH/MDH superfamily. As to quaternary structure, homodimer.

The protein localises to the cytoplasm. The enzyme catalyses (S)-malate + NAD(+) = oxaloacetate + NADH + H(+). Catalyzes the reversible oxidation of malate to oxaloacetate. Can also oxidize tartrate. The sequence is that of Malate dehydrogenase (mdh) from Archaeoglobus fulgidus (strain ATCC 49558 / DSM 4304 / JCM 9628 / NBRC 100126 / VC-16).